The sequence spans 101 residues: Protein Tat (101 aa).

The tract at residues Met-1–Asn-24 is interaction with human CREBBP. The tract at residues Met-1–Gly-48 is transactivation. The Zn(2+) site is built by Cys-22, Cys-25, and Cys-27. Residues Cys-22–Cys-37 form a cysteine-rich region. N6-acetyllysine; by host PCAF is present on Lys-28. Zn(2+) contacts are provided by Cys-30, His-33, Cys-34, and Cys-37. Positions Phe-38–Gly-48 are core. A disordered region spans residues Gly-48–Ala-101. The Nuclear localization signal, RNA-binding (TAR), and protein transduction motif lies at Arg-49–Arg-57. Residues Arg-49 to Lys-86 form an interaction with the host capping enzyme RNGTT region. Lys-51 bears the N6-acetyllysine; by host EP300 and GCN5L2 mark. Asymmetric dimethylarginine; by host PRMT6 is present on Arg-52. A Glycyl lysine isopeptide (Lys-Gly) (interchain with G-Cter in ubiquitin) cross-link involves residue Lys-71.

The protein belongs to the lentiviruses Tat family. In terms of assembly, interacts with host CCNT1. Associates with the P-TEFb complex composed at least of Tat, P-TEFb (CDK9 and CCNT1), TAR RNA, RNA Pol II. Recruits the HATs CREBBP, TAF1/TFIID, EP300, PCAF and GCN5L2. Interacts with host KAT5/Tip60; this interaction targets the latter to degradation. Interacts with the host deacetylase SIRT1. Interacts with host capping enzyme RNGTT; this interaction stimulates RNGTT. Binds to host KDR, and to the host integrins ITGAV/ITGB3 and ITGA5/ITGB1. Interacts with host KPNB1/importin beta-1 without previous binding to KPNA1/importin alpha-1. Interacts with EIF2AK2. Interacts with host nucleosome assembly protein NAP1L1; this interaction may be required for the transport of Tat within the nucleus, since the two proteins interact at the nuclear rim. Interacts with host C1QBP/SF2P32; this interaction involves lysine-acetylated Tat. Interacts with the host chemokine receptors CCR2, CCR3 and CXCR4. Interacts with host DPP4/CD26; this interaction may trigger an anti-proliferative effect. Interacts with host LDLR. Interacts with the host extracellular matrix metalloproteinase MMP1. Interacts with host PRMT6; this interaction mediates Tat's methylation. Interacts with, and is ubiquitinated by MDM2/Hdm2. Interacts with host PSMC3 and HTATIP2. Interacts with STAB1; this interaction may overcome SATB1-mediated repression of IL2 and IL2RA (interleukin) in T cells by binding to the same domain than HDAC1. Interacts (when acetylated) with human CDK13, thereby increasing HIV-1 mRNA splicing and promoting the production of the doubly spliced HIV-1 protein Nef. Interacts with host TBP; this interaction modulates the activity of transcriptional pre-initiation complex. Interacts with host RELA. Post-translationally, asymmetrical arginine methylation by host PRMT6 seems to diminish the transactivation capacity of Tat and affects the interaction with host CCNT1. In terms of processing, polyubiquitination by host MDM2 does not target Tat to degradation, but activates its transactivation function and fosters interaction with CCNT1 and TAR RNA. Phosphorylated by EIF2AK2 on serine and threonine residues adjacent to the basic region important for TAR RNA binding and function. Phosphorylation of Tat by EIF2AK2 is dependent on the prior activation of EIF2AK2 by dsRNA.

It is found in the host nucleus. The protein localises to the host nucleolus. The protein resides in the host cytoplasm. Its subcellular location is the secreted. Functionally, transcriptional activator that increases RNA Pol II processivity, thereby increasing the level of full-length viral transcripts. Recognizes a hairpin structure at the 5'-LTR of the nascent viral mRNAs referred to as the transactivation responsive RNA element (TAR) and recruits the cyclin T1-CDK9 complex (P-TEFb complex) that will in turn hyperphosphorylate the RNA polymerase II to allow efficient elongation. The CDK9 component of P-TEFb and other Tat-activated kinases hyperphosphorylate the C-terminus of RNA Pol II that becomes stabilized and much more processive. Other factors such as HTATSF1/Tat-SF1, SUPT5H/SPT5, and HTATIP2 are also important for Tat's function. Besides its effect on RNA Pol II processivity, Tat induces chromatin remodeling of proviral genes by recruiting the histone acetyltransferases (HATs) CREBBP, EP300 and PCAF to the chromatin. This also contributes to the increase in proviral transcription rate, especially when the provirus integrates in transcriptionally silent region of the host genome. To ensure maximal activation of the LTR, Tat mediates nuclear translocation of NF-kappa-B by interacting with host RELA. Through its interaction with host TBP, Tat may also modulate transcription initiation. Tat can reactivate a latently infected cell by penetrating in it and transactivating its LTR promoter. In the cytoplasm, Tat is thought to act as a translational activator of HIV-1 mRNAs. In terms of biological role, extracellular circulating Tat can be endocytosed by surrounding uninfected cells via the binding to several surface receptors such as CD26, CXCR4, heparan sulfate proteoglycans (HSPG) or LDLR. Neurons are rarely infected, but they internalize Tat via their LDLR. Through its interaction with nuclear HATs, Tat is potentially able to control the acetylation-dependent cellular gene expression. Modulates the expression of many cellular genes involved in cell survival, proliferation or in coding for cytokines or cytokine receptors. Tat plays a role in T-cell and neurons apoptosis. Tat induced neurotoxicity and apoptosis probably contribute to neuroAIDS. Circulating Tat also acts as a chemokine-like and/or growth factor-like molecule that binds to specific receptors on the surface of the cells, affecting many cellular pathways. In the vascular system, Tat binds to ITGAV/ITGB3 and ITGA5/ITGB1 integrins dimers at the surface of endothelial cells and competes with bFGF for heparin-binding sites, leading to an excess of soluble bFGF. In Pan troglodytes (Chimpanzee), this protein is Protein Tat.